Here is a 182-residue protein sequence, read N- to C-terminus: Transcription termination/antitermination protein NusG (182 aa).

The 31-residue stretch at 131-161 folds into the KOW domain; it reads GEVVRVNEGPFADFNGTVEEVDYEKSRLKVS.

Belongs to the NusG family.

In terms of biological role, participates in transcription elongation, termination and antitermination. The sequence is that of Transcription termination/antitermination protein NusG from Vibrio parahaemolyticus serotype O3:K6 (strain RIMD 2210633).